Reading from the N-terminus, the 158-residue chain is Endoribonuclease YbeY (158 aa).

Positions 119, 123, and 129 each coordinate Zn(2+).

The protein belongs to the endoribonuclease YbeY family. Zn(2+) is required as a cofactor.

The protein resides in the cytoplasm. Its function is as follows. Single strand-specific metallo-endoribonuclease involved in late-stage 70S ribosome quality control and in maturation of the 3' terminus of the 16S rRNA. The chain is Endoribonuclease YbeY from Chlamydia abortus (strain DSM 27085 / S26/3) (Chlamydophila abortus).